A 98-amino-acid chain; its full sequence is Aspartyl/glutamyl-tRNA(Asn/Gln) amidotransferase subunit C (98 aa).

The protein belongs to the GatC family. In terms of assembly, heterotrimer of A, B and C subunits.

It carries out the reaction L-glutamyl-tRNA(Gln) + L-glutamine + ATP + H2O = L-glutaminyl-tRNA(Gln) + L-glutamate + ADP + phosphate + H(+). It catalyses the reaction L-aspartyl-tRNA(Asn) + L-glutamine + ATP + H2O = L-asparaginyl-tRNA(Asn) + L-glutamate + ADP + phosphate + 2 H(+). Functionally, allows the formation of correctly charged Asn-tRNA(Asn) or Gln-tRNA(Gln) through the transamidation of misacylated Asp-tRNA(Asn) or Glu-tRNA(Gln) in organisms which lack either or both of asparaginyl-tRNA or glutaminyl-tRNA synthetases. The reaction takes place in the presence of glutamine and ATP through an activated phospho-Asp-tRNA(Asn) or phospho-Glu-tRNA(Gln). This Roseiflexus castenholzii (strain DSM 13941 / HLO8) protein is Aspartyl/glutamyl-tRNA(Asn/Gln) amidotransferase subunit C.